Here is a 584-residue protein sequence, read N- to C-terminus: MVICCAAANCSNRQGKGEKRAVSFHRFPLKDSKRLMQWLKAVQRDNWTPTKYSFLCSEHFTKDSFSKRLEDQHRLLKPTAVPSIFHLAEKKRRAGGHGRPRRRDTGKASAGLRAQASDPVDGKAAAGSPSSSSASPMAKPEPRKLKRATPQGRTAARAARETAGQERGRQPLEGRAEDGPASAATSCSQGEAGTGAEDAGEEGATPADRGLVDRSGVSADDFTPPGSGACKFIGSLHSYSFSSKHARERPAVPREPVERKRLRRDAEPGCSGSSPGPEKGPAQSPPRACPSASSSLTATPQKPAQGASAPPTDVTPKPAAEAVQSEHSDASPMSINEVILSASGACKLIDSLHSYCFSSRQSKSQVCCLREQVEKKNGELRTLRQRVSRSDSQVRELRQKLDQLRRLSLPHLSSLLPPGREPPKMSPVVEPLSWMLGTWLSEPPGAGTFPTLQPFRYLEEAHISHVGQPMLNFSFNAFHPDTHKPMHRECGFIRLEPDTNKVAFVSAQNTGIVEVEEGEVNGQELCIASHSIARISFAKEPHVEQITRKFRLNSEGNLEQTVSMATTTQPLTQHLHVTYKKVTP.

The THAP-type zinc finger occupies M1 to F85. Residues I84–A330 are disordered. Positions E89–D104 are enriched in basic residues. Over residues G122 to A138 the composition is skewed to low complexity. Residues A158 to D178 are compositionally biased toward basic and acidic residues. Low complexity predominate over residues G190–D208. The short motif at L236–Y239 is the HCFC1-binding motif (HBM) element. Phosphoserine is present on S240. The span at E248–E267 shows a compositional bias: basic and acidic residues. Residues P422–P584 form a nitrobindin region. T451 and H574 together coordinate heme b.

This sequence in the C-terminal section; belongs to the nitrobindin family. As to quaternary structure, homodimer. Heme b is required as a cofactor.

The protein resides in the cytoplasm. Its subcellular location is the nucleus. It carries out the reaction peroxynitrite = nitrate. It participates in nitrogen metabolism. Heme-binding protein able to scavenge peroxynitrite and to protect free L-tyrosine against peroxynitrite-mediated nitration, by acting as a peroxynitrite isomerase that converts peroxynitrite to nitrate. Therefore, this protein likely plays a role in peroxynitrite sensing and in the detoxification of reactive nitrogen and oxygen species (RNS and ROS, respectively). Is able to bind nitric oxide (NO) in vitro, but may act as a sensor of peroxynitrite levels in vivo, possibly modulating the transcriptional activity residing in the N-terminal region. The sequence is that of Peroxynitrite isomerase THAP4 from Bos taurus (Bovine).